A 206-amino-acid polypeptide reads, in one-letter code: Small ribosomal subunit protein uS4 (206 aa).

The 61-residue stretch at 96–156 (GRLDNVVYRM…EKAKKQSRVK (61 aa)) folds into the S4 RNA-binding domain.

This sequence belongs to the universal ribosomal protein uS4 family. As to quaternary structure, part of the 30S ribosomal subunit. Contacts protein S5. The interaction surface between S4 and S5 is involved in control of translational fidelity.

One of the primary rRNA binding proteins, it binds directly to 16S rRNA where it nucleates assembly of the body of the 30S subunit. In terms of biological role, with S5 and S12 plays an important role in translational accuracy. The chain is Small ribosomal subunit protein uS4 from Klebsiella pneumoniae (strain 342).